Consider the following 122-residue polypeptide: Large ribosomal subunit protein uL14 (122 aa).

It belongs to the universal ribosomal protein uL14 family. As to quaternary structure, part of the 50S ribosomal subunit. Forms a cluster with proteins L3 and L19. In the 70S ribosome, L14 and L19 interact and together make contacts with the 16S rRNA in bridges B5 and B8.

Its function is as follows. Binds to 23S rRNA. Forms part of two intersubunit bridges in the 70S ribosome. The sequence is that of Large ribosomal subunit protein uL14 from Bacillus mycoides (strain KBAB4) (Bacillus weihenstephanensis).